A 341-amino-acid chain; its full sequence is Shk1 kinase-binding protein 15 (341 aa).

WD repeat units follow at residues 33–70 (AHEG…QIAD), 77–114 (IANA…LVHT), 119–157 (SHKG…GGKV), 197–234 (SSKS…ILHE), and 237–274 (AHKK…VIEH). A disordered region spans residues 293–341 (NSEPKNVEDEAAKRQSLDSETSETSSESESESEYYSTSKQPPVKRTKHA). A compositionally biased stretch (basic and acidic residues) spans 297–309 (KNVEDEAAKRQSL).

Its function is as follows. Negatively regulates pak1/shk1 kinase activity leading to proper execution of cytoskeletal remodeling and cytokinetic functions. In terms of biological role, interacts with pak1/shk1. This Schizosaccharomyces pombe (strain 972 / ATCC 24843) (Fission yeast) protein is Shk1 kinase-binding protein 15 (skb15).